A 388-amino-acid polypeptide reads, in one-letter code: Chorismate synthase (388 aa).

Arg-39 and Arg-45 together coordinate NADP(+). Residues 95 to 118 are disordered; it reads EKNEKSRRVSRPRPGHADLVGGMK. FMN is bound by residues 130 to 132, 251 to 252, Gly-296, 311 to 315, and Arg-337; these read RSS, NA, and KPIPT.

Belongs to the chorismate synthase family. In terms of assembly, homotetramer. Requires FMNH2 as cofactor.

It carries out the reaction 5-O-(1-carboxyvinyl)-3-phosphoshikimate = chorismate + phosphate. The protein operates within metabolic intermediate biosynthesis; chorismate biosynthesis; chorismate from D-erythrose 4-phosphate and phosphoenolpyruvate: step 7/7. In terms of biological role, catalyzes the anti-1,4-elimination of the C-3 phosphate and the C-6 proR hydrogen from 5-enolpyruvylshikimate-3-phosphate (EPSP) to yield chorismate, which is the branch point compound that serves as the starting substrate for the three terminal pathways of aromatic amino acid biosynthesis. This reaction introduces a second double bond into the aromatic ring system. This Listeria welshimeri serovar 6b (strain ATCC 35897 / DSM 20650 / CCUG 15529 / CIP 8149 / NCTC 11857 / SLCC 5334 / V8) protein is Chorismate synthase.